Here is a 142-residue protein sequence, read N- to C-terminus: Large ribosomal subunit protein uL13 (142 aa).

Belongs to the universal ribosomal protein uL13 family. In terms of assembly, part of the 50S ribosomal subunit.

Functionally, this protein is one of the early assembly proteins of the 50S ribosomal subunit, although it is not seen to bind rRNA by itself. It is important during the early stages of 50S assembly. The polypeptide is Large ribosomal subunit protein uL13 (Chromohalobacter salexigens (strain ATCC BAA-138 / DSM 3043 / CIP 106854 / NCIMB 13768 / 1H11)).